The primary structure comprises 394 residues: 2-oxoglutarate and iron-dependent oxygenase domain-containing protein CP2 (394 aa).

Positions 1–35 (MSSEQREGSQETTTTTVEGNGTIAGQNSHSAAPTT) are disordered. Residues 17 to 35 (VEGNGTIAGQNSHSAAPTT) are compositionally biased toward polar residues. Residues 248 to 347 (DSHHGFVVEY…RVNMLLWCRS (100 aa)) enclose the Fe2OG dioxygenase domain. Residues His268, Asp270, and His328 each contribute to the Fe cation site. Arg338 contributes to the 2-oxoglutarate binding site.

Fe(2+) serves as cofactor. L-ascorbate is required as a cofactor. As to expression, expressed in roots, cotyledons, rosette leaves, cauline leaves, inflorescences and siliques.

Its subcellular location is the nucleus. It localises to the nucleoplasm. Its function is as follows. Participates in the epigenetic repression of flowering genes in association with ICU11. Functions in the repression of several members of the MADS-box transcription factors family, including SEP3, during vegetative development via histone modification. This is 2-oxoglutarate and iron-dependent oxygenase domain-containing protein CP2 from Arabidopsis thaliana (Mouse-ear cress).